Here is a 160-residue protein sequence, read N- to C-terminus: Protein cornichon homolog 2 (160 aa).

At 1–10 the chain is on the cytoplasmic side; it reads MAFTFAAFCY. The helical transmembrane segment at 11 to 31 threads the bilayer; sequence MLTLVLCAALIFFVIWQIIAF. Topologically, residues 32–72 are lumenal; the sequence is DELRTDFKNPIDQSNPTRARERILNIERICNLLRRLVVPEY. The helical transmembrane segment at 73 to 93 threads the bilayer; sequence SIHGLFCLMFMCAGEWVTLGL. The Cytoplasmic portion of the chain corresponds to 94–138; sequence NIPLLLYHLWRFFHRPADGSEVMYDPVSVMNADILNYCQKESWCK. The chain crosses the membrane as a helical span at residues 139 to 159; it reads LGFYLLSFFYYLYSMVYALVS. Residue Phe160 is a topological domain, lumenal.

It belongs to the cornichon family.

The protein localises to the membrane. In terms of biological role, regulates the trafficking and gating properties of AMPA-selective glutamate receptors (AMPARs). This chain is Protein cornichon homolog 2 (cnih2), found in Danio rerio (Zebrafish).